Reading from the N-terminus, the 311-residue chain is Putative HTH-type transcriptional regulatory protein PTO0557 (311 aa).

Positions 132–186 (MRRIRELKGYSVGYLSSKLGISRRSISLYESGSSATIDIYLKLEETLGEDLTKDI) constitute an HTH cro/C1-type domain. The H-T-H motif DNA-binding region spans 143 to 162 (VGYLSSKLGISRRSISLYES).

The polypeptide is Putative HTH-type transcriptional regulatory protein PTO0557 (Picrophilus torridus (strain ATCC 700027 / DSM 9790 / JCM 10055 / NBRC 100828 / KAW 2/3)).